A 96-amino-acid polypeptide reads, in one-letter code: Pyrimidine/purine nucleoside phosphorylase (96 aa).

The protein belongs to the nucleoside phosphorylase PpnP family.

The enzyme catalyses a purine D-ribonucleoside + phosphate = a purine nucleobase + alpha-D-ribose 1-phosphate. It carries out the reaction adenosine + phosphate = alpha-D-ribose 1-phosphate + adenine. It catalyses the reaction cytidine + phosphate = cytosine + alpha-D-ribose 1-phosphate. The catalysed reaction is guanosine + phosphate = alpha-D-ribose 1-phosphate + guanine. The enzyme catalyses inosine + phosphate = alpha-D-ribose 1-phosphate + hypoxanthine. It carries out the reaction thymidine + phosphate = 2-deoxy-alpha-D-ribose 1-phosphate + thymine. It catalyses the reaction uridine + phosphate = alpha-D-ribose 1-phosphate + uracil. The catalysed reaction is xanthosine + phosphate = alpha-D-ribose 1-phosphate + xanthine. In terms of biological role, catalyzes the phosphorolysis of diverse nucleosides, yielding D-ribose 1-phosphate and the respective free bases. Can use uridine, adenosine, guanosine, cytidine, thymidine, inosine and xanthosine as substrates. Also catalyzes the reverse reactions. The chain is Pyrimidine/purine nucleoside phosphorylase from Erwinia tasmaniensis (strain DSM 17950 / CFBP 7177 / CIP 109463 / NCPPB 4357 / Et1/99).